Here is a 233-residue protein sequence, read N- to C-terminus: Enolase-phosphatase E1 (233 aa).

This sequence belongs to the HAD-like hydrolase superfamily. MasA/MtnC family. In terms of assembly, monomer. Mg(2+) serves as cofactor.

The catalysed reaction is 5-methylsulfanyl-2,3-dioxopentyl phosphate + H2O = 1,2-dihydroxy-5-(methylsulfanyl)pent-1-en-3-one + phosphate. The protein operates within amino-acid biosynthesis; L-methionine biosynthesis via salvage pathway; L-methionine from S-methyl-5-thio-alpha-D-ribose 1-phosphate: step 3/6. It functions in the pathway amino-acid biosynthesis; L-methionine biosynthesis via salvage pathway; L-methionine from S-methyl-5-thio-alpha-D-ribose 1-phosphate: step 4/6. Bifunctional enzyme that catalyzes the enolization of 2,3-diketo-5-methylthiopentyl-1-phosphate (DK-MTP-1-P) into the intermediate 2-hydroxy-3-keto-5-methylthiopentenyl-1-phosphate (HK-MTPenyl-1-P), which is then dephosphorylated to form the acireductone 1,2-dihydroxy-3-keto-5-methylthiopentene (DHK-MTPene). The protein is Enolase-phosphatase E1 of Hahella chejuensis (strain KCTC 2396).